The chain runs to 139 residues: Small ribosomal subunit protein uS12m (139 aa).

A mitochondrion-targeting transit peptide spans 1 to 29 (MSWPGLLYGLTTSLSRGLALAPQLWAARS).

The protein belongs to the universal ribosomal protein uS12 family. As to quaternary structure, component of the mitochondrial ribosome small subunit (28S) which comprises a 12S rRNA and about 30 distinct proteins.

Its subcellular location is the mitochondrion. The sequence is that of Small ribosomal subunit protein uS12m (Mrps12) from Mus musculus (Mouse).